A 541-amino-acid polypeptide reads, in one-letter code: GMP synthase [glutamine-hydrolyzing] (541 aa).

Positions 17-212 constitute a Glutamine amidotransferase type-1 domain; it reads TILVLDFGSQ…AVDICQSTTD (196 aa). The active-site Nucleophile is cysteine 93. Residues histidine 186 and glutamate 188 contribute to the active site. The GMPS ATP-PPase domain maps to 213-416; sequence WTMGKFVDQE…LGIPEDLVWR (204 aa). 241–247 contacts ATP; sequence SGGVDST. The XMP site is built by arginine 315, aspartate 478, lysine 533, and glutamate 539.

Homodimer. It depends on Mg(2+) as a cofactor.

The protein resides in the cytoplasm. It is found in the cytosol. The enzyme catalyses XMP + L-glutamine + ATP + H2O = GMP + L-glutamate + AMP + diphosphate + 2 H(+). It functions in the pathway purine metabolism; GMP biosynthesis; GMP from XMP (L-Gln route): step 1/1. In terms of biological role, catalyzes the conversion of xanthine monophosphate (XMP) to GMP in the presence of glutamine and ATP through an adenyl-XMP intermediate. The sequence is that of GMP synthase [glutamine-hydrolyzing] (GUA1) from Phaeosphaeria nodorum (strain SN15 / ATCC MYA-4574 / FGSC 10173) (Glume blotch fungus).